A 321-amino-acid polypeptide reads, in one-letter code: Methenyltetrahydromethanopterin cyclohydrolase (321 aa).

Belongs to the MCH family.

Its subcellular location is the cytoplasm. It carries out the reaction 5,10-methenyl-5,6,7,8-tetrahydromethanopterin + H2O = N(5)-formyl-5,6,7,8-tetrahydromethanopterin + H(+). Its pathway is one-carbon metabolism; methanogenesis from CO(2); 5,10-methenyl-5,6,7,8-tetrahydromethanopterin from CO(2): step 3/3. In terms of biological role, catalyzes the reversible interconversion of 5-formyl-H(4)MPT to methenyl-H(4)MPT(+). In Methanosarcina mazei (strain ATCC BAA-159 / DSM 3647 / Goe1 / Go1 / JCM 11833 / OCM 88) (Methanosarcina frisia), this protein is Methenyltetrahydromethanopterin cyclohydrolase.